A 245-amino-acid polypeptide reads, in one-letter code: Bax inhibitor 1 (245 aa).

Topologically, residues 1-30 are cytoplasmic; it reads MADTANYINDRFQTFMNGLGDRYEPYVREH. A helical transmembrane segment spans residues 31–51; it reads LSKVYMVLGSTAAATAMGAML. Topologically, residues 52-55 are lumenal; that stretch reads QMRD. A helical transmembrane segment spans residues 56 to 76; it reads FLDLGVLAAVATLVLVLGLHF. The Cytoplasmic segment spans residues 77–88; that stretch reads YKDDGKNYYTRL. The chain crosses the membrane as a helical span at residues 89–109; sequence GMLYAFGFCSGQTLGPLLGYI. The Lumenal segment spans residues 110 to 115; sequence CSINPA. Residues 116–136 traverse the membrane as a helical segment; it reads IILSALTGTFVTFISLSLSAL. The Cytoplasmic portion of the chain corresponds to 137-142; it reads LAEQGK. Residues 143–163 form a helical membrane-spanning segment; the sequence is YLYLGGMLVSVINTMALLSLF. Over 164-169 the chain is Lumenal; that stretch reads NMVFKS. A helical transmembrane segment spans residues 170 to 190; the sequence is YFVQVTQLYVGVFVMAAFIVY. Residues 191–245 are Cytoplasmic-facing; sequence DTQNIVEKCRNGNRDVVQHALDLFFDVLSMFRRLLIILTQKEERKQNERRQNKTK.

This sequence belongs to the BI1 family.

The protein localises to the endoplasmic reticulum membrane. Suppressor of apoptosis. Modulates unfolded protein response signaling. Negatively regulates autophagy and autophagosome formation, especially during periods of nutrient deprivation, and reduces cell survival during starvation. The sequence is that of Bax inhibitor 1 from Drosophila melanogaster (Fruit fly).